Here is an 83-residue protein sequence, read N- to C-terminus: Exodeoxyribonuclease 7 small subunit (83 aa).

It belongs to the XseB family. As to quaternary structure, heterooligomer composed of large and small subunits.

The protein resides in the cytoplasm. The enzyme catalyses Exonucleolytic cleavage in either 5'- to 3'- or 3'- to 5'-direction to yield nucleoside 5'-phosphates.. Its function is as follows. Bidirectionally degrades single-stranded DNA into large acid-insoluble oligonucleotides, which are then degraded further into small acid-soluble oligonucleotides. This chain is Exodeoxyribonuclease 7 small subunit, found in Nitrobacter winogradskyi (strain ATCC 25391 / DSM 10237 / CIP 104748 / NCIMB 11846 / Nb-255).